A 281-amino-acid polypeptide reads, in one-letter code: 2,3,4,5-tetrahydropyridine-2,6-dicarboxylate N-succinyltransferase (281 aa).

The protein belongs to the transferase hexapeptide repeat family.

The protein localises to the cytoplasm. It carries out the reaction (S)-2,3,4,5-tetrahydrodipicolinate + succinyl-CoA + H2O = (S)-2-succinylamino-6-oxoheptanedioate + CoA. Its pathway is amino-acid biosynthesis; L-lysine biosynthesis via DAP pathway; LL-2,6-diaminopimelate from (S)-tetrahydrodipicolinate (succinylase route): step 1/3. In Afipia carboxidovorans (strain ATCC 49405 / DSM 1227 / KCTC 32145 / OM5) (Oligotropha carboxidovorans), this protein is 2,3,4,5-tetrahydropyridine-2,6-dicarboxylate N-succinyltransferase.